A 1493-amino-acid polypeptide reads, in one-letter code: Mediator of RNA polymerase II transcription subunit 14 (1493 aa).

Disordered stretches follow at residues 1–51, 71–110, 408–427, 674–693, 894–913, and 957–997; these read MPSS…YHAA, MIGV…SAKG, TEQG…APTV, QRPR…RSAS, EAGT…NDVD, and GSNT…SSDD. Positions 90 to 100 are enriched in basic and acidic residues; it reads PDSKQSSDADG.

It belongs to the Mediator complex subunit 14 family. As to quaternary structure, component of the Mediator complex.

It localises to the nucleus. Functionally, component of the Mediator complex, a coactivator involved in the regulated transcription of nearly all RNA polymerase II-dependent genes. Mediator functions as a bridge to convey information from gene-specific regulatory proteins to the basal RNA polymerase II transcription machinery. Mediator is recruited to promoters by direct interactions with regulatory proteins and serves as a scaffold for the assembly of a functional preinitiation complex with RNA polymerase II and the general transcription factors. This Mycosarcoma maydis (Corn smut fungus) protein is Mediator of RNA polymerase II transcription subunit 14 (RGR1).